The chain runs to 617 residues: DNA mismatch repair protein MutL (617 aa).

Belongs to the DNA mismatch repair MutL/HexB family.

This protein is involved in the repair of mismatches in DNA. It is required for dam-dependent methyl-directed DNA mismatch repair. May act as a 'molecular matchmaker', a protein that promotes the formation of a stable complex between two or more DNA-binding proteins in an ATP-dependent manner without itself being part of a final effector complex. The sequence is that of DNA mismatch repair protein MutL from Bartonella tribocorum (strain CIP 105476 / IBS 506).